Reading from the N-terminus, the 78-residue chain is Acyl carrier protein (78 aa).

In terms of domain architecture, Carrier spans 2–77 (SDIADRVKKI…DAIKFLEKNS (76 aa)). An O-(pantetheine 4'-phosphoryl)serine modification is found at S37.

Belongs to the acyl carrier protein (ACP) family. 4'-phosphopantetheine is transferred from CoA to a specific serine of apo-ACP by AcpS. This modification is essential for activity because fatty acids are bound in thioester linkage to the sulfhydryl of the prosthetic group.

It is found in the cytoplasm. It participates in lipid metabolism; fatty acid biosynthesis. Carrier of the growing fatty acid chain in fatty acid biosynthesis. The sequence is that of Acyl carrier protein from Methylobacterium sp. (strain 4-46).